A 196-amino-acid polypeptide reads, in one-letter code: Probable malonic semialdehyde reductase RutE (196 aa).

This sequence belongs to the nitroreductase family. HadB/RutE subfamily. The cofactor is FMN.

The catalysed reaction is 3-hydroxypropanoate + NADP(+) = 3-oxopropanoate + NADPH + H(+). In terms of biological role, may reduce toxic product malonic semialdehyde to 3-hydroxypropionic acid, which is excreted. In Escherichia coli O157:H7, this protein is Probable malonic semialdehyde reductase RutE.